Here is a 549-residue protein sequence, read N- to C-terminus: Glucose-6-phosphate isomerase (549 aa).

Glu353 acts as the Proton donor in catalysis. Residues His384 and Lys513 contribute to the active site.

This sequence belongs to the GPI family.

It localises to the cytoplasm. It carries out the reaction alpha-D-glucose 6-phosphate = beta-D-fructose 6-phosphate. Its pathway is carbohydrate biosynthesis; gluconeogenesis. The protein operates within carbohydrate degradation; glycolysis; D-glyceraldehyde 3-phosphate and glycerone phosphate from D-glucose: step 2/4. Its function is as follows. Catalyzes the reversible isomerization of glucose-6-phosphate to fructose-6-phosphate. This is Glucose-6-phosphate isomerase from Brucella anthropi (strain ATCC 49188 / DSM 6882 / CCUG 24695 / JCM 21032 / LMG 3331 / NBRC 15819 / NCTC 12168 / Alc 37) (Ochrobactrum anthropi).